Consider the following 494-residue polypeptide: UDP-N-acetylmuramoyl-L-alanyl-D-glutamate--L-lysine ligase (494 aa).

Residue Ser-30 participates in UDP-N-acetyl-alpha-D-muramoyl-L-alanyl-D-glutamate binding. 110-116 (GTNGKTS) contacts ATP. UDP-N-acetyl-alpha-D-muramoyl-L-alanyl-D-glutamate-binding positions include 152-153 (TT), Ser-179, and Arg-187. Lys-219 bears the N6-carboxylysine mark. The short motif at 406 to 409 (DNPA) is the L-lysine recognition motif element.

Belongs to the MurCDEF family. MurE subfamily. Carboxylation is probably crucial for Mg(2+) binding and, consequently, for the gamma-phosphate positioning of ATP.

The protein localises to the cytoplasm. The enzyme catalyses UDP-N-acetyl-alpha-D-muramoyl-L-alanyl-D-glutamate + L-lysine + ATP = UDP-N-acetyl-alpha-D-muramoyl-L-alanyl-gamma-D-glutamyl-L-lysine + ADP + phosphate + H(+). It functions in the pathway cell wall biogenesis; peptidoglycan biosynthesis. Functionally, catalyzes the addition of L-lysine to the nucleotide precursor UDP-N-acetylmuramoyl-L-alanyl-D-glutamate (UMAG) in the biosynthesis of bacterial cell-wall peptidoglycan. The protein is UDP-N-acetylmuramoyl-L-alanyl-D-glutamate--L-lysine ligase of Staphylococcus aureus (strain Mu3 / ATCC 700698).